We begin with the raw amino-acid sequence, 180 residues long: GTP cyclohydrolase 1 (180 aa).

Residues cysteine 71, histidine 74, and cysteine 142 each coordinate Zn(2+).

The protein belongs to the GTP cyclohydrolase I family. In terms of assembly, homomer.

The catalysed reaction is GTP + H2O = 7,8-dihydroneopterin 3'-triphosphate + formate + H(+). It functions in the pathway cofactor biosynthesis; 7,8-dihydroneopterin triphosphate biosynthesis; 7,8-dihydroneopterin triphosphate from GTP: step 1/1. In Helicobacter pylori (strain G27), this protein is GTP cyclohydrolase 1.